Here is a 114-residue protein sequence, read N- to C-terminus: Fumarate reductase subunit D (114 aa).

3 helical membrane-spanning segments follow: residues 24-44 (ISAL…PLGI), 49-69 (GIIA…LTIF), and 94-114 (LIFY…VASI).

This sequence belongs to the FrdD family. Part of an enzyme complex containing four subunits: a flavoprotein (FrdA), an iron-sulfur protein (FrdB), and two hydrophobic anchor proteins (FrdC and FrdD).

The protein localises to the cell inner membrane. Its function is as follows. Anchors the catalytic components of the fumarate reductase complex to the cell membrane, binds quinones. The sequence is that of Fumarate reductase subunit D from Actinobacillus succinogenes (strain ATCC 55618 / DSM 22257 / CCUG 43843 / 130Z).